The chain runs to 186 residues: Chromosomal replication initiator protein DnaA (186 aa).

Residue E1 is a region of interest, domain I, interacts with DnaA modulators. A region of interest (domain II) is located at residue E1. The interval 1-99 (EFFKTFNALI…GALNKVTHTS (99 aa)) is domain III, AAA+ region. The interval 100 to 186 (LIGRSMTVES…GRNFGGRDHT (87 aa)) is domain IV, binds dsDNA.

Belongs to the DnaA family. In terms of assembly, oligomerizes as a right-handed, spiral filament on DNA at oriC.

Its subcellular location is the cytoplasm. Functionally, plays an essential role in the initiation and regulation of chromosomal replication. ATP-DnaA binds to the origin of replication (oriC) to initiate formation of the DNA replication initiation complex once per cell cycle. Binds the DnaA box (a 9 base pair repeat at the origin) and separates the double-stranded (ds)DNA. Forms a right-handed helical filament on oriC DNA; dsDNA binds to the exterior of the filament while single-stranded (ss)DNA is stabiized in the filament's interior. The ATP-DnaA-oriC complex binds and stabilizes one strand of the AT-rich DNA unwinding element (DUE), permitting loading of DNA polymerase. After initiation quickly degrades to an ADP-DnaA complex that is not apt for DNA replication. Binds acidic phospholipids. This is Chromosomal replication initiator protein DnaA from Wolbachia sp.